We begin with the raw amino-acid sequence, 320 residues long: Cytochrome c biogenesis protein CcsA (320 aa).

8 consecutive transmembrane segments (helical) span residues 13-33 (ISFS…FLLV), 46-66 (GMIV…IYSG), 73-93 (LYES…VSYL), 102-122 (LSAI…SGLL), 147-167 (MVLG…LLVI), 226-246 (IISL…VWAN), 259-274 (ETWA…IYFH), and 289-309 (VASM…LLGI).

The protein belongs to the CcmF/CycK/Ccl1/NrfE/CcsA family. As to quaternary structure, may interact with Ccs1.

The protein resides in the plastid. It localises to the chloroplast thylakoid membrane. In terms of biological role, required during biogenesis of c-type cytochromes (cytochrome c6 and cytochrome f) at the step of heme attachment. The sequence is that of Cytochrome c biogenesis protein CcsA from Gossypium hirsutum (Upland cotton).